A 104-amino-acid chain; its full sequence is Large ribosomal subunit protein bL21 (104 aa).

This sequence belongs to the bacterial ribosomal protein bL21 family. As to quaternary structure, part of the 50S ribosomal subunit. Contacts protein L20.

This protein binds to 23S rRNA in the presence of protein L20. This Acidiphilium cryptum (strain JF-5) protein is Large ribosomal subunit protein bL21.